Here is a 131-residue protein sequence, read N- to C-terminus: Peptide methionine sulfoxide reductase MsrB (131 aa).

The MsrB domain maps to 8–130; that stretch reads DAEWRAQLTD…NSVCLDLKRS (123 aa). Residues cysteine 47, cysteine 50, cysteine 96, and cysteine 99 each coordinate Zn(2+). Cysteine 119 functions as the Nucleophile in the catalytic mechanism.

The protein belongs to the MsrB Met sulfoxide reductase family. Zn(2+) serves as cofactor.

It catalyses the reaction L-methionyl-[protein] + [thioredoxin]-disulfide + H2O = L-methionyl-(R)-S-oxide-[protein] + [thioredoxin]-dithiol. In Alkalilimnicola ehrlichii (strain ATCC BAA-1101 / DSM 17681 / MLHE-1), this protein is Peptide methionine sulfoxide reductase MsrB.